Here is a 687-residue protein sequence, read N- to C-terminus: Solute carrier organic anion transporter family member 1B2 (687 aa).

Residues 1-28 (MDHTQQSRKAAEAQPSRSKQTRFCDGFK) lie on the Cytoplasmic side of the membrane. The chain crosses the membrane as a helical span at residues 29–48 (LFLAALSFSYICKALGGVVM). The Extracellular portion of the chain corresponds to 49 to 67 (KSSITQIERRFDIPSSISG). Residues 68 to 88 (LIDGGFEIGNLLVIVFVSYFG) form a helical membrane-spanning segment. Residues 89–94 (SKLHRP) lie on the Cytoplasmic side of the membrane. A helical transmembrane segment spans residues 95-119 (KLIGIGCFIMGIGSILTALPHFFMG). Residues 120 to 165 (YYKYAKENDIGSLGNSTLTCFINQMTSPTGPSPEIVEKGCEKGLKS) lie on the Extracellular side of the membrane. Asn134 is a glycosylation site (N-linked (GlcNAc...) asparagine). Residues 166–194 (HMWIYVLMGNMLRGIGETPIVPLGISYLD) traverse the membrane as a helical segment. At 195–213 (DFAKEGHTSMHLGTLHTIA) the chain is on the cytoplasmic side. A helical transmembrane segment spans residues 214 to 234 (MIGPILGFIMSSVFAKIYVDV). Over 235–252 (GYVDLNSVRITPNDARWV) the chain is Extracellular. The helical transmembrane segment at 253–277 (GAWWLSFIVNGLLCITSSIPFFFLP) threads the bilayer. The Cytoplasmic portion of the chain corresponds to 278–328 (KIPKRSQEERKNSVSLHAPKTDEEKKHMTNLTKQEEQDPSNMTGFLRSLRS). The interval 286–311 (ERKNSVSLHAPKTDEEKKHMTNLTKQ) is disordered. 2 positions are modified to phosphoserine: Ser290 and Ser292. Residues 329–350 (ILTNEIYVIFLILTLLQVSGFI) form a helical membrane-spanning segment. The Extracellular segment spans residues 351 to 370 (GSFTYLFKFIEQQFGRTASQ). A helical transmembrane segment spans residues 371–394 (ANFLLGIITIPTMATAMFLGGYIV). Residues 395-398 (KKFK) are Cytoplasmic-facing. A helical membrane pass occupies residues 399–422 (LTSVGIAKFVFFTSSVAYAFQFLY). The Extracellular portion of the chain corresponds to 423–531 (FPLLCENKPF…YKCKTNYYFY (109 aa)). The 58-residue stretch at 450–507 (DVPLSYCNSDCSCDKNQWEPICGENGVTYISPCLAGCKSFRGDKKPNNTEFYDCSCIS) folds into the Kazal-like domain. 3 disulfides stabilise this stretch: Cys456/Cys486, Cys462/Cys482, and Cys471/Cys505. Asn496 and Asn511 each carry an N-linked (GlcNAc...) asparagine glycan. A helical transmembrane segment spans residues 532–554 (IILQVTVSFFTAMGSPSLILILM). The Cytoplasmic segment spans residues 555-563 (KSVQPELKS). Residues 564–589 (LAMGFHSLIIRALGGILAPIYYGAFI) traverse the membrane as a helical segment. The Extracellular portion of the chain corresponds to 590-623 (DRTCIKWSVTSCGKRGACRLYNSRLFGFSYLGLN). A helical transmembrane segment spans residues 624–641 (LALKTPPLFLYVVLIYFT). Residues 642–687 (KRKYKRNDNKTLENGRQFTDEGNPDSVNKNGYYCVPYDEQSNETPL) are Cytoplasmic-facing. Phosphothreonine is present on Thr660. Ser667 carries the post-translational modification Phosphoserine.

The protein belongs to the organo anion transporter (TC 2.A.60) family. In terms of tissue distribution, liver specific. Expression is highest in central perivenous hepatocytes and lowest in the periportal region. Isoform 1 predominates. Not detected in heart, brain, kidney, skeletal muscle, lung, testis or spleen.

It localises to the basolateral cell membrane. It catalyses the reaction estrone 3-sulfate(out) = estrone 3-sulfate(in). The catalysed reaction is taurocholate(out) = taurocholate(in). It carries out the reaction prostaglandin E2(out) = prostaglandin E2(in). The enzyme catalyses L-thyroxine(out) = L-thyroxine(in). Its function is as follows. Mediates the Na(+)-independent uptake of organic anions such as taurochlate, bromosulfophthalein and steroid conjugates (estrone 3-sulfate, 17-beta-glucuronosyl estradiol, dehydroepiandrosterone sulfate). Also transports prostaglandin E2 and L-thyroxine (T4). Shows a pH-sensitive substrate specificity which may be ascribed to the protonation state of the binding site and leads to a stimulation of substrate transport in an acidic microenvironment. Hydrogencarbonate/HCO3(-) acts as the probable counteranion that exchanges for organic anions. This Rattus norvegicus (Rat) protein is Solute carrier organic anion transporter family member 1B2 (Slco1b2).